The following is a 1054-amino-acid chain: Isoleucine--tRNA ligase (1054 aa).

The 'HIGH' region signature appears at 58 to 68; that stretch reads PFANGLPHYGH. Residues 627 to 631 carry the 'KMSKS' region motif; sequence KMSKS. Lysine 630 lines the ATP pocket.

This sequence belongs to the class-I aminoacyl-tRNA synthetase family. IleS type 2 subfamily. As to quaternary structure, monomer. Zn(2+) is required as a cofactor.

It is found in the cytoplasm. It carries out the reaction tRNA(Ile) + L-isoleucine + ATP = L-isoleucyl-tRNA(Ile) + AMP + diphosphate. Catalyzes the attachment of isoleucine to tRNA(Ile). As IleRS can inadvertently accommodate and process structurally similar amino acids such as valine, to avoid such errors it has two additional distinct tRNA(Ile)-dependent editing activities. One activity is designated as 'pretransfer' editing and involves the hydrolysis of activated Val-AMP. The other activity is designated 'posttransfer' editing and involves deacylation of mischarged Val-tRNA(Ile). The protein is Isoleucine--tRNA ligase of Corynebacterium efficiens (strain DSM 44549 / YS-314 / AJ 12310 / JCM 11189 / NBRC 100395).